A 243-amino-acid chain; its full sequence is tRNA (guanine-N(1)-)-methyltransferase (243 aa).

Residues Gly-113 and 133–138 (IGDFVL) contribute to the S-adenosyl-L-methionine site.

Belongs to the RNA methyltransferase TrmD family. As to quaternary structure, homodimer.

It localises to the cytoplasm. The enzyme catalyses guanosine(37) in tRNA + S-adenosyl-L-methionine = N(1)-methylguanosine(37) in tRNA + S-adenosyl-L-homocysteine + H(+). In terms of biological role, specifically methylates guanosine-37 in various tRNAs. In Bacillus velezensis (strain DSM 23117 / BGSC 10A6 / LMG 26770 / FZB42) (Bacillus amyloliquefaciens subsp. plantarum), this protein is tRNA (guanine-N(1)-)-methyltransferase.